Here is a 581-residue protein sequence, read N- to C-terminus: FAD-dependent monooxygenase DEP4 (581 aa).

43–46 (VWSK) contacts FAD. Position 54–56 (54–56 (FAQ)) interacts with NADP(+). Position 108 (Val108) interacts with FAD. NADP(+) contacts are provided by residues 183–202 (VGRS…EGKR), 219–220 (AP), and 351–352 (DI). Residue Met470 participates in FAD binding.

This sequence belongs to the FAD-binding monooxygenase family. The cofactor is FAD.

The protein operates within polyketide biosynthesis. In terms of biological role, FAD-dependent monooxygenase; part of the gene cluster that mediates the biosynthesis of depudecin, a highly oxidized eleven-carbon linear polyketide that acts as a histone deacetylase (HDAC) inhibitor and makes a small contribution to pathogenesis. The reducing polyketide synthase DEP5 is the central enzyme in depudecin biosynthesis by yielding the backbone polyketide chain. The monooxygenases DEP2 and DEP4, as well as the uncharacterized protein DEP1, then act as tailoring enzymes to modify the intermediate polyketide chain into depudecin. This chain is FAD-dependent monooxygenase DEP4, found in Alternaria brassicicola (Dark leaf spot agent).